Here is a 470-residue protein sequence, read N- to C-terminus: MDSQYETKKNDPNAIMPYPESNDEHVGEVRGLGGGIMDKEPEAQEGHAKFHRLGWKRLTVVLIVEAIALGSLSLPGAFATLGMVPGVILSVGMGLICIYTAHVIGQTKLKHPEIAHYADVGRVMFGRWGYEIISFMFVLQLIFIVGSHVLTGTIMWGTITDNGNGTCSLVFGIVSAIILFLLAIPPSFAEVAILGYIDFVSICAAILITMIATGIRSSHQEGGLAAVPWSCWPKEDLSLAEGFIAVSNIVFAYSFAMCQFSFMDEMHTPSDYKKSIVALGLIEIFIYTVTGGVVYAFVGPEVQSPALLSAGPLLAKVAFGIALPVIFISGSINTVVVSRYLIERIWPNNVIRYVNTPAGWMVWLGFDFGITLIAWVIAEAIPFFSDLLAICSALFISGFSFYFPALMYFKITRNDAKSQGKKYFLDALNMLCFVIGMGILGIGTYAAIQDIMDRYDHGKVSKPYSCAPLA.

A compositionally biased stretch (basic and acidic residues) spans 1-11 (MDSQYETKKND). The segment at 1–21 (MDSQYETKKNDPNAIMPYPES) is disordered. Over 1 to 56 (MDSQYETKKNDPNAIMPYPESNDEHVGEVRGLGGGIMDKEPEAQEGHAKFHRLGWK) the chain is Extracellular. A run of 2 helical transmembrane segments spans residues 57-77 (RLTVVLIVEAIALGSLSLPGA) and 78-98 (FATLGMVPGVILSVGMGLICI). Residues 99–131 (YTAHVIGQTKLKHPEIAHYADVGRVMFGRWGYE) lie on the Extracellular side of the membrane. The chain crosses the membrane as a helical span at residues 132 to 152 (IISFMFVLQLIFIVGSHVLTG). The Cytoplasmic portion of the chain corresponds to 153-168 (TIMWGTITDNGNGTCS). 2 helical membrane-spanning segments follow: residues 169 to 189 (LVFGIVSAIILFLLAIPPSFA) and 191 to 211 (VAILGYIDFVSICAAILITMI). The Cytoplasmic segment spans residues 212 to 236 (ATGIRSSHQEGGLAAVPWSCWPKED). A helical transmembrane segment spans residues 237–257 (LSLAEGFIAVSNIVFAYSFAM). Over 258–275 (CQFSFMDEMHTPSDYKKS) the chain is Extracellular. A helical transmembrane segment spans residues 276–296 (IVALGLIEIFIYTVTGGVVYA). Topologically, residues 297-316 (FVGPEVQSPALLSAGPLLAK) are cytoplasmic. The chain crosses the membrane as a helical span at residues 317-337 (VAFGIALPVIFISGSINTVVV). The Extracellular segment spans residues 338 to 357 (SRYLIERIWPNNVIRYVNTP). Residues 358-378 (AGWMVWLGFDFGITLIAWVIA) form a helical membrane-spanning segment. Over 379 to 386 (EAIPFFSD) the chain is Cytoplasmic. A helical transmembrane segment spans residues 387-407 (LLAICSALFISGFSFYFPALM). The Extracellular segment spans residues 408-427 (YFKITRNDAKSQGKKYFLDA). A helical membrane pass occupies residues 428–448 (LNMLCFVIGMGILGIGTYAAI). The Cytoplasmic portion of the chain corresponds to 449-470 (QDIMDRYDHGKVSKPYSCAPLA).

Belongs to the amino acid/polyamine transporter 2 family.

The protein localises to the membrane. Required for the transport of neutral aliphatic and aromatic amino acids via the N system. This chain is N amino acid transport system protein (mtr), found in Neurospora crassa (strain ATCC 24698 / 74-OR23-1A / CBS 708.71 / DSM 1257 / FGSC 987).